A 62-amino-acid polypeptide reads, in one-letter code: Conotoxin TsMLCL-02 (62 aa).

Residues 1–19 form the signal peptide; the sequence is MLCLPVFIILLLLASPAAP. The propeptide occupies 20-54; that stretch reads NPLERRIQSDLIRAALEDADMKTEKGILSSIMGTL.

This sequence belongs to the conotoxin T superfamily. Expressed by the venom duct.

The protein resides in the secreted. This Conus tessulatus (Tessellate cone) protein is Conotoxin TsMLCL-02.